The sequence spans 512 residues: Maturase K (512 aa).

Belongs to the intron maturase 2 family. MatK subfamily.

The protein localises to the plastid. Its subcellular location is the chloroplast. Usually encoded in the trnK tRNA gene intron. Probably assists in splicing its own and other chloroplast group II introns. This Lemna aequinoctialis (Lesser duckweed) protein is Maturase K.